A 620-amino-acid polypeptide reads, in one-letter code: Probable serine/threonine-protein kinase RTK1 (620 aa).

Disordered regions lie at residues 1–20, 29–130, 153–186, 210–237, and 252–271; these read MVKE…SLFR, AKIF…PVRT, KDAF…SNLS, QAST…KKKS, and HDNH…TKPK. Positions 7-18 are enriched in low complexity; sequence LHSSSSTSLSSL. Residues 56-76 show a composition bias toward basic and acidic residues; it reads KNTDSDQEDQIKYNKPNDRRS. The residue at position 58 (Thr-58) is a Phosphothreonine. Ser-60 is modified (phosphoserine). Polar residues-rich tracts occupy residues 95 to 107, 165 to 186, and 210 to 222; these read VASS…SPTS, TAHS…SNLS, and QAST…LQHN. A Phosphoserine modification is found at Ser-216. Over residues 254 to 263 the composition is skewed to basic residues; that stretch reads NHHHHHHHNR. Residues 302 to 575 enclose the Protein kinase domain; sequence GIPGRKLGEG…MNDVVKDDWL (274 aa). ATP is bound by residues 308–316 and Lys-330; that span reads LGEGASGSV. Lys-334 participates in a covalent cross-link: Glycyl lysine isopeptide (Lys-Gly) (interchain with G-Cter in ubiquitin). Asp-430 serves as the catalytic Proton acceptor.

The protein belongs to the protein kinase superfamily. Ser/Thr protein kinase family. As to quaternary structure, interacts with ribosome biogenesis factors ARC1, CKA2 and GUS1.

The catalysed reaction is L-seryl-[protein] + ATP = O-phospho-L-seryl-[protein] + ADP + H(+). It catalyses the reaction L-threonyl-[protein] + ATP = O-phospho-L-threonyl-[protein] + ADP + H(+). Functionally, probable serine/threonine-protein kinase that may be involved in ribosome biogenesis. This chain is Probable serine/threonine-protein kinase RTK1 (RTK1), found in Saccharomyces cerevisiae (strain ATCC 204508 / S288c) (Baker's yeast).